The primary structure comprises 313 residues: Serine/threonine-protein phosphatase PP2A-4 catalytic subunit (313 aa).

4 residues coordinate Mn(2+): aspartate 61, histidine 63, aspartate 89, and asparagine 121. Catalysis depends on histidine 122, which acts as the Proton donor. Mn(2+) is bound by residues histidine 171 and histidine 245. A Leucine methyl ester modification is found at leucine 313.

This sequence belongs to the PPP phosphatase family. PP-2A subfamily. As to quaternary structure, PP2A consists of a common heterodimeric core enzyme, composed of a 36 kDa catalytic subunit (subunit C) and a 65 kDa constant regulatory subunit (subunit A), that associates with a variety of regulatory subunits such as subunits B (the R2/B/PR55/B55, R3/B''/PR72/PR130/PR59 and R5/B'/B56 families). Interacts with SIC/RON3. It depends on Mn(2+) as a cofactor. In terms of processing, reversibly methyl esterified on Leu-313 by leucine carboxyl methyltransferase 1 (LCMT1) and pectin methylesterase 1 (PME1). Carboxyl methylation influences the affinity of the catalytic subunit for the different regulatory subunits, thereby modulating the PP2A holoenzyme's substrate specificity, enzyme activity and cellular localization. Phosphorylation of either threonine (by autophosphorylation-activated protein kinase) or tyrosine results in inactivation of the phosphatase. Auto-dephosphorylation has been suggested as a mechanism for reactivation.

It localises to the cytoplasm. The enzyme catalyses O-phospho-L-seryl-[protein] + H2O = L-seryl-[protein] + phosphate. The catalysed reaction is O-phospho-L-threonyl-[protein] + H2O = L-threonyl-[protein] + phosphate. Its function is as follows. Functions redundantly with PP2A3, and is involved in establishing auxin gradients, apical-basal axis of polarity and root and shoot apical meristem during embryogenesis. May dephosphorylate PIN1 and regulate its subcellular distribution for polar auxin transport. The holoenzyme composed of PP2AA1, PP2A4 and B'ZETA or B'ETA acts as a negative regulator of plant innate immunity by controlling BAK1 phosphorylation state and activation in surface-localized immune receptor complexes. This chain is Serine/threonine-protein phosphatase PP2A-4 catalytic subunit, found in Arabidopsis thaliana (Mouse-ear cress).